An 85-amino-acid chain; its full sequence is Omega-conotoxin-like Am6.5 (85 aa).

A signal peptide spans M1–A19. The propeptide occupies D20–R53. 3 disulfides stabilise this stretch: C55-C73, C62-C77, and C72-C81. Q84 is modified (glutamine amide).

The protein belongs to the conotoxin O1 family. Is not hydroxylated. As to expression, expressed by the venom duct.

It localises to the secreted. Its function is as follows. Omega-conotoxins act at presynaptic membranes, they bind and block voltage-gated calcium channels (Cav). This chain is Omega-conotoxin-like Am6.5, found in Conus amadis (Amadis cone).